A 641-amino-acid polypeptide reads, in one-letter code: SUMO-activating enzyme subunit 2-B (641 aa).

ATP-binding positions include 24 to 29 (GAGGIG), Asp48, 56 to 59 (NLNR), Lys72, 95 to 96 (SI), and 117 to 122 (DNNAAR). Residues Cys158 and Cys161 each coordinate Zn(2+). Cys173 acts as the Glycyl thioester intermediate in catalysis. Zn(2+) is bound by residues Cys439 and Cys442. The interval 546-641 (GDVPEKGPQK…EEDDDIIALD (96 aa)) is disordered. The segment covering 548 to 561 (VPEKGPQKPPEESV) has biased composition (basic and acidic residues). Residues 562–579 (KNITNGSDDGAQPSTSKA) are compositionally biased toward polar residues. 2 stretches are compositionally biased toward acidic residues: residues 582 to 594 (QDDV…DEES) and 630 to 641 (PVEEDDDIIALD).

This sequence belongs to the ubiquitin-activating E1 family. As to quaternary structure, heterodimer of sae1 and uba2/sae2. The heterodimer corresponds to the two domains that are encoded on a single polypeptide chain in ubiquitin-activating enzyme E1. Interacts with ube2i.

The protein resides in the nucleus. It functions in the pathway protein modification; protein sumoylation. Functionally, the heterodimer acts as an E1 ligase for sumo1, sumo2, and sumo3. It mediates ATP-dependent activation of sumo proteins followed by formation of a thioester bond between a sumo protein and a conserved active site cysteine residue on uba2/sae2. This is SUMO-activating enzyme subunit 2-B (uba2-b) from Xenopus laevis (African clawed frog).